Consider the following 770-residue polypeptide: MVNKEQFYDQIRKALEDGNTRYYRNLIYIERDDYFDHVKEIISLFLNFKSNPSVAYGFVPWASGSKERMRTIKEYFSKFDDIDYANAEYYLGNTYDLVILDTVDNFQPINIGRLVDLARGGGLIIIYTNNLIKDKTFRTSIMRNGLILDEYEKRFKRKLYEHEGIFIIDVNEYIPKPFSGNTMPKAEKKVPRNPLMPKEIHELSLSEDQNRVIESFTYLLSGGQRALVLTAARGRGKSAATGLSIAGLIEKLRERKEKSIRIIVTAPSIASASQVMSFAKLGLEALGEELSVKVSDTGHIKSLRGDYFKLEYVPPDAAIEDEGELLIIDEAAALGINYIDLALRAWKKVALVTTVHGYEGSNKAFLRYLRRLIESKRIRVKWVNMEQPLRYAKGDPIEKWLYDALLLDAEPSEPQYLNDTMIYEDVDKSELANDDNRLRAIYGIMVTAHYKNNPDDLMIMLDGIHHKIKAIRIGENSYIAACQIAEEGELSDNMVDIALKGGTFDGDLIPDRIIKHVRIKDFAKLRGWRIVRIAVAPELQDKGFGSELLKMIYEEARDKGVDWVGSSFMSDQKVLNFWIKNGFIPVHISPKKNEKLGDYPVVVIRPISDIATKIVKISAYMLKEKLLNTLHDVYFNMNPEVVRLMLTSTKIVSKTINVSPIILDKTISFLQGVSPYESSADGIHMLTLKYFWDGERDWSLTQDEELVLIAKVLQGKPWSYVSTVLSSNRTHIYELIYSAISKLMKKYYNLTADSKVGLTLKDVMNSQQYD.

Residues glutamine 209 and arginine 390 each contribute to the ATP site. The 151-residue stretch at 458–608 (MIMLDGIHHK…YPVVVIRPIS (151 aa)) folds into the N-acetyltransferase domain. 533–535 (IAV) provides a ligand contact to acetyl-CoA.

This sequence belongs to the TmcA family.

It is found in the cytoplasm. It carries out the reaction cytidine(34) in elongator tRNA(Met) + acetyl-CoA + ATP + H2O = N(4)-acetylcytidine(34) in elongator tRNA(Met) + ADP + phosphate + CoA + H(+). The catalysed reaction is a cytidine in RNA + acetyl-CoA + ATP + H2O = an N(4)-acetylcytidine in RNA + ADP + phosphate + CoA + H(+). The enzyme catalyses a cytidine in tRNA + acetyl-CoA + ATP + H2O = an N(4)-acetylcytidine in tRNA + ADP + phosphate + CoA + H(+). It catalyses the reaction a cytidine in mRNA + acetyl-CoA + ATP + H2O = an N(4)-acetylcytidine in mRNA + ADP + phosphate + CoA + H(+). Functionally, catalyzes the formation of N(4)-acetylcytidine (ac(4)C) at the wobble position of tRNA(Met), by using acetyl-CoA as an acetyl donor and ATP (or GTP). In terms of biological role, catalyzes the formation of 41 N(4)-acetylcytidine (ac(4)C) sites in RNA, almost always on the middle C of a CCG motif. Modifications are found mostly in tRNA, with small amounts found in rRNA and mRNA. The protein is tRNA(Met) cytidine acetyltransferase TmcA 2 of Saccharolobus solfataricus (strain ATCC 35092 / DSM 1617 / JCM 11322 / P2) (Sulfolobus solfataricus).